We begin with the raw amino-acid sequence, 170 residues long: Adenine phosphoribosyltransferase (170 aa).

It belongs to the purine/pyrimidine phosphoribosyltransferase family. As to quaternary structure, homodimer.

It is found in the cytoplasm. It carries out the reaction AMP + diphosphate = 5-phospho-alpha-D-ribose 1-diphosphate + adenine. It functions in the pathway purine metabolism; AMP biosynthesis via salvage pathway; AMP from adenine: step 1/1. Its function is as follows. Catalyzes a salvage reaction resulting in the formation of AMP, that is energically less costly than de novo synthesis. The protein is Adenine phosphoribosyltransferase of Fervidobacterium nodosum (strain ATCC 35602 / DSM 5306 / Rt17-B1).